Consider the following 584-residue polypeptide: Protein disulfide-isomerase-like protein of the testis (584 aa).

An N-terminal signal peptide occupies residues 1 to 20; the sequence is MDLLWMPLLLVAACVSAVHS. Residues N58, N128, N160, and N340 are each glycosylated (N-linked (GlcNAc...) asparagine). The region spanning 388-451 is the Thioredoxin domain; the sequence is LVKQLVGKNF…IAKIDVTAND (64 aa). N540 carries an N-linked (GlcNAc...) asparagine glycan. Positions 581–584 match the Prevents secretion from ER motif; that stretch reads KEEL.

It belongs to the protein disulfide isomerase family. As to quaternary structure, homodimer. The homodimer is not disulfide-linked. Interacts with ERO1A and CLGN. In terms of processing, N-glycosylated. As to expression, testis-specific.

The protein resides in the endoplasmic reticulum. Functionally, probable redox-inactive chaperone involved in spermatogenesis. The sequence is that of Protein disulfide-isomerase-like protein of the testis (PDILT) from Homo sapiens (Human).